Consider the following 366-residue polypeptide: Histidinol-phosphate aminotransferase (366 aa).

N6-(pyridoxal phosphate)lysine is present on Lys226.

The protein belongs to the class-II pyridoxal-phosphate-dependent aminotransferase family. Histidinol-phosphate aminotransferase subfamily. The cofactor is pyridoxal 5'-phosphate.

It catalyses the reaction L-histidinol phosphate + 2-oxoglutarate = 3-(imidazol-4-yl)-2-oxopropyl phosphate + L-glutamate. It functions in the pathway amino-acid biosynthesis; L-histidine biosynthesis; L-histidine from 5-phospho-alpha-D-ribose 1-diphosphate: step 7/9. The protein is Histidinol-phosphate aminotransferase of Methanosarcina barkeri (strain Fusaro / DSM 804).